The primary structure comprises 228 residues: MAWNGRFGEDGEEERSLELSLALPGYFSSSGLQGNTSTAADGAKGNDGFKASRPAAPVVGWPPVRSFRRNLASSSSSSKPPRGGRDAAAAATGGKVARFVKVNMDGVPIGRKVDLAAHGGYGELSAAVDRLFRGLLAAQRDPTMATAAAAAAAGESCTGEEEAIAGLLDGGSGEYTLVYEDDEGDQMLVGDVPWNMFIAAARRLRVLRSSDLNASTIRAGSRKRAAAE.

The EAR-like (transcriptional repression) motif lies at 19–23 (LSLAL). Positions 28 to 39 (SSSGLQGNTSTA) are enriched in polar residues. Disordered regions lie at residues 28–57 (SSSG…PAAP) and 70–90 (NLAS…AAAA). The 118-residue stretch at 97–214 (ARFVKVNMDG…RVLRSSDLNA (118 aa)) folds into the PB1 domain.

This sequence belongs to the Aux/IAA family. Homodimers and heterodimers. Expressed in roots, flowers and seedlings.

The protein resides in the nucleus. In terms of biological role, aux/IAA proteins are short-lived transcriptional factors that function as repressors of early auxin response genes at low auxin concentrations. This is Auxin-responsive protein IAA16 (IAA16) from Oryza sativa subsp. japonica (Rice).